The following is a 441-amino-acid chain: Ribosomal protein uS12 methylthiotransferase RimO (441 aa).

In terms of domain architecture, MTTase N-terminal spans P8 to P118. Residues C17, C53, C82, C150, C154, and C157 each contribute to the [4Fe-4S] cluster site. One can recognise a Radical SAM core domain in the interval L136–E373. The TRAM domain occupies Q376–V441.

It belongs to the methylthiotransferase family. RimO subfamily. It depends on [4Fe-4S] cluster as a cofactor.

It is found in the cytoplasm. It carries out the reaction L-aspartate(89)-[ribosomal protein uS12]-hydrogen + (sulfur carrier)-SH + AH2 + 2 S-adenosyl-L-methionine = 3-methylsulfanyl-L-aspartate(89)-[ribosomal protein uS12]-hydrogen + (sulfur carrier)-H + 5'-deoxyadenosine + L-methionine + A + S-adenosyl-L-homocysteine + 2 H(+). Functionally, catalyzes the methylthiolation of an aspartic acid residue of ribosomal protein uS12. This chain is Ribosomal protein uS12 methylthiotransferase RimO, found in Escherichia coli (strain SMS-3-5 / SECEC).